The sequence spans 137 residues: Protein LTO1 homolog (137 aa).

At A2 the chain carries N-acetylalanine. The tract at residues G22–G58 is deca-GX3 motif; required for interaction with YAE1 and the CIA complex.

The protein belongs to the LTO1 family. As to quaternary structure, forms a complex with YAE1. Interacts with PYCR1 and PYCR2.

Its subcellular location is the nucleus. The complex LTO1:YAE1 functions as a target specific adapter that probably recruits apo-ABCE1 to the cytosolic iron-sulfur protein assembly (CIA) complex machinery. May be required for biogenesis of the large ribosomal subunit and initiation of translation. May play a role in the regulation of proline metabolism and ROS production. In Mus musculus (Mouse), this protein is Protein LTO1 homolog.